The following is a 474-amino-acid chain: ATP synthase subunit beta 2 (474 aa).

Glycine 156–threonine 163 is a binding site for ATP.

Belongs to the ATPase alpha/beta chains family. In terms of assembly, F-type ATPases have 2 components, CF(1) - the catalytic core - and CF(0) - the membrane proton channel. CF(1) has five subunits: alpha(3), beta(3), gamma(1), delta(1), epsilon(1). CF(0) has three main subunits: a(1), b(2) and c(9-12). The alpha and beta chains form an alternating ring which encloses part of the gamma chain. CF(1) is attached to CF(0) by a central stalk formed by the gamma and epsilon chains, while a peripheral stalk is formed by the delta and b chains.

The protein resides in the cell inner membrane. It carries out the reaction ATP + H2O + 4 H(+)(in) = ADP + phosphate + 5 H(+)(out). In terms of biological role, produces ATP from ADP in the presence of a proton gradient across the membrane. The catalytic sites are hosted primarily by the beta subunits. In Shewanella frigidimarina (strain NCIMB 400), this protein is ATP synthase subunit beta 2.